Here is a 277-residue protein sequence, read N- to C-terminus: Large ribosomal subunit protein uL2c (277 aa).

A compositionally biased stretch (polar residues) spans 1 to 11 (MNTRSYSTFTP). Disordered regions lie at residues 1–47 (MNTR…RNNS) and 254–277 (YSAL…RRRK).

The protein belongs to the universal ribosomal protein uL2 family. In terms of assembly, part of the 50S ribosomal subunit.

The protein resides in the plastid. Its subcellular location is the chloroplast. The protein is Large ribosomal subunit protein uL2c (rpl2) of Cryptomeria japonica (Japanese cedar).